The primary structure comprises 92 residues: Elongation factor 1-beta (92 aa).

The protein belongs to the EF-1-beta/EF-1-delta family.

Functionally, promotes the exchange of GDP for GTP in EF-1-alpha/GDP, thus allowing the regeneration of EF-1-alpha/GTP that could then be used to form the ternary complex EF-1-alpha/GTP/AAtRNA. The chain is Elongation factor 1-beta from Pyrobaculum calidifontis (strain DSM 21063 / JCM 11548 / VA1).